The sequence spans 240 residues: T-cell antigen CD7 (240 aa).

A signal peptide spans 1-25 (MAGPPRLLLLPLLLALARGLPGALA). Positions 26–130 (AQEVQQSPHC…NVYGSGTLVL (105 aa)) constitute an Ig-like domain. The Extracellular segment spans residues 26–180 (AQEVQQSPHC…PDPPAASALP (155 aa)). 2 disulfides stabilise this stretch: Cys35–Cys142 and Cys48–Cys114. N-linked (GlcNAc...) asparagine glycans are attached at residues Asn45 and Asn96. The segment at 140 to 172 (HRCSDAPPRASALPAPPTGSALPDPQTASALPD) is disordered. A run of 4 repeats spans residues 145-153 (APPRASALP), 154-162 (APPTGSALP), 163-171 (DPQTASALP), and 172-180 (DPPAASALP). The segment at 145–180 (APPRASALPAPPTGSALPDPQTASALPDPPAASALP) is 4 X 9 AA tandem repeats, potential spacer function. Residues 181–201 (AALAVISFLLGLGLGVACVLA) form a helical membrane-spanning segment. Residue Cys198 is the site of S-palmitoyl cysteine attachment. Topologically, residues 202–240 (RTQIKKLCSWRDKNSAACVVYEDMSHSRCNTLSSPNQYQ) are cytoplasmic.

As to quaternary structure, interacts with SECTM1. As to expression, expressed on T-cells and natural killer (NK) cells and their precursors.

It is found in the membrane. In terms of biological role, transmembrane glycoprotein expressed by T-cells and natural killer (NK) cells and their precursors. Plays a costimulatory role in T-cell activation upon binding to its ligand K12/SECTM1. In turn, mediates the production of cytokines such as IL-2. On resting NK-cells, CD7 activation results in a significant induction of interferon-gamma levels. The sequence is that of T-cell antigen CD7 (CD7) from Homo sapiens (Human).